Here is a 91-residue protein sequence, read N- to C-terminus: Small ribosomal subunit protein bS16 (91 aa).

Belongs to the bacterial ribosomal protein bS16 family.

This Limosilactobacillus fermentum (strain NBRC 3956 / LMG 18251) (Lactobacillus fermentum) protein is Small ribosomal subunit protein bS16.